The sequence spans 529 residues: Bifunctional purine biosynthesis protein PurH (529 aa).

The 147-residue stretch at 3-149 (DRIPLKRALI…KNHAFVTVVV (147 aa)) folds into the MGS-like domain.

The protein belongs to the PurH family.

It catalyses the reaction (6R)-10-formyltetrahydrofolate + 5-amino-1-(5-phospho-beta-D-ribosyl)imidazole-4-carboxamide = 5-formamido-1-(5-phospho-D-ribosyl)imidazole-4-carboxamide + (6S)-5,6,7,8-tetrahydrofolate. The catalysed reaction is IMP + H2O = 5-formamido-1-(5-phospho-D-ribosyl)imidazole-4-carboxamide. The protein operates within purine metabolism; IMP biosynthesis via de novo pathway; 5-formamido-1-(5-phospho-D-ribosyl)imidazole-4-carboxamide from 5-amino-1-(5-phospho-D-ribosyl)imidazole-4-carboxamide (10-formyl THF route): step 1/1. Its pathway is purine metabolism; IMP biosynthesis via de novo pathway; IMP from 5-formamido-1-(5-phospho-D-ribosyl)imidazole-4-carboxamide: step 1/1. The sequence is that of Bifunctional purine biosynthesis protein PurH from Paracoccus denitrificans (strain Pd 1222).